A 250-amino-acid polypeptide reads, in one-letter code: Urease accessory protein UreG 3 (250 aa).

The segment at 1–24 is disordered; it reads MPDNASAQQPGQPAQGPNEHYHQP. Positions 7–17 are enriched in low complexity; that stretch reads AQQPGQPAQGP. 37 to 44 is a GTP binding site; sequence GPVGTGKS. The interval 230-250 is disordered; that stretch reads GTHVPTDPGPMAPHSHSHDGS.

This sequence belongs to the SIMIBI class G3E GTPase family. UreG subfamily. In terms of assembly, homodimer. UreD, UreF and UreG form a complex that acts as a GTP-hydrolysis-dependent molecular chaperone, activating the urease apoprotein by helping to assemble the nickel containing metallocenter of UreC. The UreE protein probably delivers the nickel.

The protein localises to the cytoplasm. In terms of biological role, facilitates the functional incorporation of the urease nickel metallocenter. This process requires GTP hydrolysis, probably effectuated by UreG. The chain is Urease accessory protein UreG 3 from Streptomyces griseus subsp. griseus (strain JCM 4626 / CBS 651.72 / NBRC 13350 / KCC S-0626 / ISP 5235).